The sequence spans 804 residues: Elongation factor G, mitochondrial (804 aa).

The N-terminal 63 residues, Met-1–Arg-63, are a transit peptide targeting the mitochondrion. The region spanning Arg-99–Ala-385 is the tr-type G domain. GTP-binding positions include Ala-108 to Thr-115, Asp-183 to His-187, and Asn-237 to Asp-240.

Belongs to the TRAFAC class translation factor GTPase superfamily. Classic translation factor GTPase family. EF-G/EF-2 subfamily.

It is found in the mitochondrion. Its pathway is protein biosynthesis; polypeptide chain elongation. Its function is as follows. Mitochondrial GTPase that catalyzes the GTP-dependent ribosomal translocation step during translation elongation. During this step, the ribosome changes from the pre-translocational (PRE) to the post-translocational (POST) state as the newly formed A-site-bound peptidyl-tRNA and P-site-bound deacylated tRNA move to the P and E sites, respectively. Catalyzes the coordinated movement of the two tRNA molecules, the mRNA and conformational changes in the ribosome. The polypeptide is Elongation factor G, mitochondrial (mef1) (Botryotinia fuckeliana (strain B05.10) (Noble rot fungus)).